The sequence spans 190 residues: Putative manganese efflux pump MntP (190 aa).

6 helical membrane-spanning segments follow: residues 3 to 23 (PASI…AAVG), 39 to 59 (IGLI…FIGQ), 65 to 85 (VANW…LHMI), 106 to 128 (WLLA…GLAF), 133 to 155 (IWVA…VMLG), and 157 to 177 (AIGT…LIIV).

The protein belongs to the MntP (TC 9.B.29) family.

The protein localises to the cell inner membrane. In terms of biological role, probably functions as a manganese efflux pump. The protein is Putative manganese efflux pump MntP of Pseudomonas fluorescens (strain ATCC BAA-477 / NRRL B-23932 / Pf-5).